The following is a 501-amino-acid chain: MELHNDEKRLLKAFQDSNKKIMNLEELSEYIEKEKVMRAAFWLSGRDFLEIIENKTRVCELTELGKNSLDSEIPERKVANYIKENNLESIPIKDLSKILEKDETGAALGNLKKKELVTIDKGNIVFKNLDYKDNEEEVLKKVSEDFNLSNYSEDEVKIIENLKKRGFLKINEVVDRSFELKSAGIDFIKNPIEIKEEITQLTREMIVSGKWNDYTIRPYDAKIPTEEIYPVKAHPMSKIIQEVNEVLISMGFKEVKSQIVQTEFWNFDTLFEPQDHPARDMQDTFFVKYPNTGIVPKDLLEKVKGIHECGTIGSEKISKGWCYKFDEKVSERTVLRTHTTVSSIKYLASLSETERENPQKVFCIDRVFRNETIDYKHLPEFYQCEGIVMAEDVNFDNLVGVLKEFLRKLGFEKVRIRPAYFPFTEPSLEAEVYMEGKGWLELLGAGVFRPEVLEPFGIKKPVLAWGIGLSRLAMLRLGLTDIRELHKNDIEWLKKTAVSEK.

Residues threonine 340 and phenylalanine 423 each contribute to the L-phenylalanine site. Glutamate 425 lines the Mg(2+) pocket. Phenylalanine 448 contributes to the L-phenylalanine binding site.

The protein belongs to the class-II aminoacyl-tRNA synthetase family. Phe-tRNA synthetase alpha subunit type 2 subfamily. Tetramer of two alpha and two beta subunits. Mg(2+) serves as cofactor.

It is found in the cytoplasm. The catalysed reaction is tRNA(Phe) + L-phenylalanine + ATP = L-phenylalanyl-tRNA(Phe) + AMP + diphosphate + H(+). In Methanococcus maripaludis (strain C7 / ATCC BAA-1331), this protein is Phenylalanine--tRNA ligase alpha subunit.